The chain runs to 369 residues: MSDLPAVVVGLSGGVDSSVAIASLKAQGHPVVGLTLWLMKGKGQCCSEGLVDAARLCEQLGVPHHIVDSREIFEKYIVNYLISGYANGVTPLPCSQCNRLVKFGPMLAYSREQLGIDYIATGHYAQVKYNPTSDRYELWRAVDRHKDQSYFLYDLPQEILAHVLFPLGQQTKAETRALAAQYGLPTASKPESQDLCLIEAHGSMRQFLDQYLPRQQGEIVDVYGRVLGYHQGIHHYTIGQRKGLGIAAPEPLYVVALDREHNRVIVGDRATAGRRECTVARVNWVSIPPPKEPMTATVQIRYRTPPVPVTIIPDANAEQVQLEFAEPQFGVTPGQAAVWYAGDRLLGGGIIQPFGTPTLHPLEATATHV.

ATP contacts are provided by residues 10–17 (GLSGGVDS) and Leu-36. The Nucleophile role is filled by Cys-97. A disulfide bond links Cys-97 and Cys-196. Position 122 (Gly-122) interacts with ATP. The segment at 146 to 148 (KDQ) is interaction with tRNA. The active-site Cysteine persulfide intermediate is Cys-196. The interaction with tRNA stretch occupies residues 301–302 (RY).

This sequence belongs to the MnmA/TRMU family.

The protein localises to the cytoplasm. It catalyses the reaction S-sulfanyl-L-cysteinyl-[protein] + uridine(34) in tRNA + AH2 + ATP = 2-thiouridine(34) in tRNA + L-cysteinyl-[protein] + A + AMP + diphosphate + H(+). In terms of biological role, catalyzes the 2-thiolation of uridine at the wobble position (U34) of tRNA, leading to the formation of s(2)U34. The chain is tRNA-specific 2-thiouridylase MnmA from Thermosynechococcus vestitus (strain NIES-2133 / IAM M-273 / BP-1).